A 51-amino-acid polypeptide reads, in one-letter code: Large ribosomal subunit protein eL39 (51 aa).

It belongs to the eukaryotic ribosomal protein eL39 family.

Functionally, binds specifically to a region in 26S rRNA near the subunit interface. The protein is Large ribosomal subunit protein eL39 (rpl39e) of Sulfolobus acidocaldarius (strain ATCC 33909 / DSM 639 / JCM 8929 / NBRC 15157 / NCIMB 11770).